Consider the following 112-residue polypeptide: Outer membrane protein assembly factor BamE (112 aa).

An N-terminal signal peptide occupies residues M1 to G19. C20 carries the N-palmitoyl cysteine lipid modification. A lipid anchor (S-diacylglycerol cysteine) is attached at C20.

The protein belongs to the BamE family. In terms of assembly, part of the Bam complex, which is composed of the outer membrane protein BamA, and four lipoproteins BamB, BamC, BamD and BamE.

It localises to the cell outer membrane. In terms of biological role, part of the outer membrane protein assembly complex, which is involved in assembly and insertion of beta-barrel proteins into the outer membrane. The chain is Outer membrane protein assembly factor BamE from Salmonella typhimurium (strain LT2 / SGSC1412 / ATCC 700720).